We begin with the raw amino-acid sequence, 601 residues long: Probable protein arginine N-methyltransferase 3 (601 aa).

Positions 1–10 are enriched in basic and acidic residues; it reads MAATMVKHEI. Residues 1 to 50 form a disordered region; the sequence is MAATMVKHEILNYSEDEEENYSDEGDWGDWKADDNGIEGGEEEEEDDGDD. Composition is skewed to acidic residues over residues 14–27 and 35–50; these read SEDE…EGDW and NGIE…DGDD. The segment at 57 to 78 adopts a C2H2-type zinc-finger fold; sequence CLFCDSHFVSCDLLFEHCRLSH. Residues 242–554 enclose the SAM-dependent MTase PRMT-type domain; it reads NENYFGSYSS…NDRREAIGTE (313 aa). Positions 264, 288, 310, 312, 345, and 346 each coordinate S-adenosyl-L-homocysteine. Residues Glu365 and Glu374 contribute to the active site.

It belongs to the class I-like SAM-binding methyltransferase superfamily. Protein arginine N-methyltransferase family.

It is found in the cytoplasm. The protein resides in the cytosol. The catalysed reaction is L-arginyl-[protein] + S-adenosyl-L-methionine = N(omega)-methyl-L-arginyl-[protein] + S-adenosyl-L-homocysteine + H(+). It carries out the reaction L-arginyl-[protein] + 2 S-adenosyl-L-methionine = N(omega),N(omega)-dimethyl-L-arginyl-[protein] + 2 S-adenosyl-L-homocysteine + 2 H(+). Protein-arginine N-methyltransferase that catalyzes both the monomethylation and asymmetric dimethylation of the guanidino nitrogens of arginine residues in target proteins, and therefore falls into the group of type I methyltransferases. The chain is Probable protein arginine N-methyltransferase 3 (PRMT3) from Arabidopsis thaliana (Mouse-ear cress).